The sequence spans 657 residues: Glycogen debranching enzyme (657 aa).

The active-site Nucleophile is the Asp-336. Glu-371 functions as the Proton donor in the catalytic mechanism. Positions 460–479 are disordered; sequence ANGEENRDGTNNNYSNNHGK.

It belongs to the glycosyl hydrolase 13 family.

The catalysed reaction is Hydrolysis of (1-&gt;6)-alpha-D-glucosidic linkages to branches with degrees of polymerization of three or four glucose residues in limit dextrin.. It participates in glycan degradation; glycogen degradation. Functionally, removes maltotriose and maltotetraose chains that are attached by 1,6-alpha-linkage to the limit dextrin main chain, generating a debranched limit dextrin. The protein is Glycogen debranching enzyme of Escherichia coli O17:K52:H18 (strain UMN026 / ExPEC).